A 119-amino-acid polypeptide reads, in one-letter code: U-scoloptoxin(01)-Er1a (119 aa).

An N-terminal signal peptide occupies residues 1–22 (MEIHSNIILLLLIALFAIFVKM). The Chitin-binding type-2 domain occupies 39–97 (NFACSGKKPGFYADEGFDCQVYHMCSPEGQLTTYLCGPGTIFNQKKLVCDLPTNYNCAD). A disulfide bond links Cys74 and Cys87.

The protein belongs to the scoloptoxin-01 family. Post-translationally, contains 3 disulfide bonds. Expressed by the venom gland.

Its subcellular location is the secreted. The protein is U-scoloptoxin(01)-Er1a of Ethmostigmus rubripes (Giant centipede).